Reading from the N-terminus, the 140-residue chain is Profilin-1 (140 aa).

Alanine 2 is subject to N-acetylalanine. Phosphoserine is present on serine 28. A Glycyl lysine isopeptide (Lys-Gly) (interchain with G-Cter in SUMO2); alternate cross-link involves residue lysine 54. Lysine 54 is covalently cross-linked (Glycyl lysine isopeptide (Lys-Gly) (interchain with G-Cter in ubiquitin); alternate). Residues serine 57 and serine 85 each carry the phosphoserine modification. An N6-acetyllysine mark is found at lysine 105 and lysine 108. The residue at position 129 (tyrosine 129) is a Phosphotyrosine. A Phosphoserine; by ROCK1 modification is found at serine 138.

The protein belongs to the profilin family. In terms of assembly, found in a complex with XPO6, Ran, ACTB and PFN1. Interacts with ACTB. Interacts with VASP. Interacts with HTT. Interacts with SH3BGRL. Occurs in many kinds of cells as a complex with monomeric actin in a 1:1 ratio. Interacts with ACTMAP. Post-translationally, phosphorylation at Ser-138 reduces its affinity for G-actin and blocks its interaction with HTT, reducing its ability to inhibit androgen receptor (AR) and HTT aggregation. Expressed in epididymis (at protein level).

It is found in the cytoplasm. The protein localises to the cytoskeleton. Binds to actin and affects the structure of the cytoskeleton. At high concentrations, profilin prevents the polymerization of actin, whereas it enhances it at low concentrations. By binding to PIP2, it inhibits the formation of IP3 and DG. Inhibits androgen receptor (AR) and HTT aggregation and binding of G-actin is essential for its inhibition of AR. This chain is Profilin-1 (PFN1), found in Homo sapiens (Human).